Here is a 387-residue protein sequence, read N- to C-terminus: Synaptotagmin-8 (387 aa).

Topologically, residues M1–R34 are extracellular. The helical; Signal-anchor for type III membrane protein transmembrane segment at W35–A55 threads the bilayer. Over A56–S387 the chain is Cytoplasmic. Residues K70–G99 are disordered. C2 domains are found at residues Q103 to Y219 and Q231 to A346.

This sequence belongs to the synaptotagmin family. As to quaternary structure, homodimer or homooligomer. Homodimerization and homooligomerization do not depend on Ca(2+). Interacts with SYNCRIP isoform 2 C-terminus. Binds inositol 1,3,4,5-tetrakisphosphate (IP4). Binds to AP2 in a Ca(2+)-independent manner. Interacts with STX1A, STX1B and STX2; the interaction is Ca(2+)-dependent.

It is found in the cell membrane. The protein resides in the cytoplasmic vesicle. The protein localises to the secretory vesicle. Its subcellular location is the acrosome. Involved in the trafficking and exocytosis of secretory vesicles in non-neuronal tissues. Mediates Ca(2+)-regulation of exocytosis acrosomal reaction in sperm. May mediate Ca(2+)-regulation of exocytosis in insulin secreted cells. The chain is Synaptotagmin-8 (SYT8) from Homo sapiens (Human).